The following is a 748-amino-acid chain: Histone-lysine N-methyltransferase EZH2 (748 aa).

Residues 184–199 are compositionally biased toward acidic residues; sequence YEDDEDGDDNQDDEQD. Disordered stretches follow at residues 184 to 220 and 342 to 428; these read YEDD…LRKF and AERI…NIEP. Basic and acidic residues predominate over residues 200-220; that stretch reads DTAKDQDDNMEDKETQPLRKF. Residues 347–359 show a composition bias toward basic residues; sequence TPPKRPSGRRRGR. The segment covering 362–374 has biased composition (polar residues); sequence NNTSRPSTPTVNV. Positions 376 to 387 are enriched in basic and acidic residues; it reads EAKDTDSDREAG. The CXC domain occupies 505–607; the sequence is CRKIQLKKDG…SKNVSCKNCS (103 aa). Residues 614-729 form the SET domain; the sequence is KHLLLAPSDV…TGEELFFDYR (116 aa).

Belongs to the class V-like SAM-binding methyltransferase superfamily. Histone-lysine methyltransferase family. EZ subfamily. In terms of assembly, component of the prc2/eed-ezh2 complex.

It localises to the nucleus. The catalysed reaction is L-lysyl(27)-[histone H3] + 3 S-adenosyl-L-methionine = N(6),N(6),N(6)-trimethyl-L-lysyl(27)-[histone H3] + 3 S-adenosyl-L-homocysteine + 3 H(+). Polycomb group (PcG) protein. Catalytic subunit of the prc2/eed-ezh2 complex, which methylates 'Lys-9' and 'Lys-27' of histone H3, leading to transcriptional repression of the affected target gene. May repress transcription of the egr2 and en2 genes. May regulate the circadian clock via histone methylation at the promoter of the circadian genes. The chain is Histone-lysine N-methyltransferase EZH2 (ezh2-a) from Xenopus laevis (African clawed frog).